The following is a 251-amino-acid chain: Flap endonuclease Xni (251 aa).

A Mg(2+)-binding site is contributed by Asp104. The 5'-3' exonuclease domain occupies 160–249; it reads VLPRQLPDYW…IDGNLQQLRL (90 aa). Residues Leu171, Ala172, Pro180, Val182, and Ile185 each contribute to the K(+) site. Residues 184–189 form an interaction with DNA region; that stretch reads GIGPKS.

This sequence belongs to the Xni family. Mg(2+) is required as a cofactor. It depends on K(+) as a cofactor.

In terms of biological role, has flap endonuclease activity. During DNA replication, flap endonucleases cleave the 5'-overhanging flap structure that is generated by displacement synthesis when DNA polymerase encounters the 5'-end of a downstream Okazaki fragment. This Salmonella typhimurium (strain LT2 / SGSC1412 / ATCC 700720) protein is Flap endonuclease Xni.